The primary structure comprises 156 residues: Transcription elongation factor GreA (156 aa).

Residues 2-27 adopt a coiled-coil conformation; the sequence is EKTFPMTKEGLDKLKAELENLKLVKR.

Belongs to the GreA/GreB family.

Necessary for efficient RNA polymerase transcription elongation past template-encoded arresting sites. The arresting sites in DNA have the property of trapping a certain fraction of elongating RNA polymerases that pass through, resulting in locked ternary complexes. Cleavage of the nascent transcript by cleavage factors such as GreA or GreB allows the resumption of elongation from the new 3'terminus. GreA releases sequences of 2 to 3 nucleotides. This Lactococcus lactis subsp. cremoris (strain SK11) protein is Transcription elongation factor GreA.